Consider the following 357-residue polypeptide: Anthranilate phosphoribosyltransferase (357 aa).

Residues G91, G94–D95, T99, N101–T104, K119–S127, and S131 contribute to the 5-phospho-alpha-D-ribose 1-diphosphate site. G91 lines the anthranilate pocket. A Mg(2+)-binding site is contributed by S103. N122 serves as a coordination point for anthranilate. R177 lines the anthranilate pocket. Positions 235 and 236 each coordinate Mg(2+).

Belongs to the anthranilate phosphoribosyltransferase family. Homodimer. Mg(2+) serves as cofactor.

It catalyses the reaction N-(5-phospho-beta-D-ribosyl)anthranilate + diphosphate = 5-phospho-alpha-D-ribose 1-diphosphate + anthranilate. It functions in the pathway amino-acid biosynthesis; L-tryptophan biosynthesis; L-tryptophan from chorismate: step 2/5. Its function is as follows. Catalyzes the transfer of the phosphoribosyl group of 5-phosphorylribose-1-pyrophosphate (PRPP) to anthranilate to yield N-(5'-phosphoribosyl)-anthranilate (PRA). This is Anthranilate phosphoribosyltransferase from Shewanella baltica (strain OS185).